The chain runs to 332 residues: PTS-dependent dihydroxyacetone kinase, dihydroxyacetone-binding subunit DhaK (332 aa).

In terms of domain architecture, DhaK spans 9–331 (QPQDVVSEML…LNEDVKTISW (323 aa)). Dihydroxyacetone contacts are provided by residues 55–58 (GSGH), lysine 106, and aspartate 111. Residue histidine 58 is the Proton acceptor of the active site. Histidine 220 acts as the Tele-hemiaminal-histidine intermediate in catalysis.

As to quaternary structure, homodimer. The dihydroxyacetone kinase complex is composed of a homodimer of DhaM, a homodimer of DhaK and the subunit DhaL.

It catalyses the reaction dihydroxyacetone + phosphoenolpyruvate = dihydroxyacetone phosphate + pyruvate. The protein operates within polyol metabolism; glycerol degradation. Its function is as follows. Dihydroxyacetone binding subunit of the dihydroxyacetone kinase, which is responsible the phosphoenolpyruvate (PEP)-dependent phosphorylation of dihydroxyacetone via a phosphoryl group transfer from DhaL-ATP. The chain is PTS-dependent dihydroxyacetone kinase, dihydroxyacetone-binding subunit DhaK from Lactococcus lactis subsp. lactis (strain IL1403) (Streptococcus lactis).